The primary structure comprises 433 residues: Probable M18 family aminopeptidase 2 (433 aa).

His-84, His-161, and His-409 together coordinate Zn(2+).

This sequence belongs to the peptidase M18 family. It depends on Zn(2+) as a cofactor.

The polypeptide is Probable M18 family aminopeptidase 2 (Clostridium novyi (strain NT)).